Consider the following 730-residue polypeptide: MGDVLAHESELLGLVKEYLDFAEFEDTLKTFSKECKVKGKPLCKTVGGSLKKDSNSLMIQKDLVAAFDSGDQKLFFDLWEGHIPSSIRDTDSLAQKLEFYLHIHFAIYLLKYSGGRPDRQELDERISYFKTYLETKGASLSQTTEFLPFYALPFVPNPMVHPSFKELFQDSWTPELKLKLEKFLALIFKASNTPKLLTIYKENGSNNKEMLQQLHQQLLEAERRAMAYLKRYNKMQADYHSLIGVTAELVDSLEATVSGKMITPEYLQSVCVRLFSNQMRQSLAHSVDFTRPGTASTMLRASLAPEKLKDVPLLPSLDYEKLKKDLIWGSDRLKAFLLQALRWRLTTSHPGEQRETVLQAYISNDLLDCHSHNQRSVLQLLHSKSEAVRQYMARLVNALASLAEGRLYLAQNTKVLRMLEGRLKEEDKDVITRENVLGALQKFSLRRPLQTAMIRDGLIFWLIDLLKEPDCLSDYTLEYSVALLMNLCLRSAGKNMCAKVAGLMLKVLSDLLGHENHEIQPYVNGALYSILSIPSIREEARAMGMEDILRCFIKEGNAEMIRQIEFIIKQLNSEDLLDGVLESDDDEDEDDEEDHDIMEADLDKDELIQPQLGELSGEKLLTTEYLGIMTNTGKARRKGLASVQWSGDEPLRRPVTPGGHRTGCPVVGDHLISSQNAQQARNGCPRPIPVAQPDDYKEGKRGVAGRATPSSCKSAECAEPVLSSGAQKPK.

In terms of domain architecture, LisH spans 7-39; it reads HESELLGLVKEYLDFAEFEDTLKTFSKECKVKG. Positions 205 to 242 form a coiled coil; the sequence is SNNKEMLQQLHQQLLEAERRAMAYLKRYNKMQADYHSL. Phosphoserine is present on Ser583. Residues 675 to 730 are disordered; the sequence is QNAQQARNGCPRPIPVAQPDDYKEGKRGVAGRATPSSCKSAECAEPVLSSGAQKPK.

Interacts with TOGARAM1, CCDC66, CEP104, CSPP1 and CEP290. Interacts with NDUFAF2.

It localises to the cytoplasm. The protein resides in the cytoskeleton. Its subcellular location is the cilium basal body. The protein localises to the cell projection. It is found in the cilium. It localises to the microtubule organizing center. The protein resides in the centrosome. Its subcellular location is the centriole. Involved in ciliogenesis. It is required for appropriate acetylation and polyglutamylation of ciliary microtubules, and regulation of cilium length. Acts as a positive regulator of hedgehog (Hh)signaling. May participate in the trafficking and/or retention of GLI2 and GLI3 proteins at the ciliary tip. The protein is LisH domain-containing protein ARMC9 (Armc9) of Rattus norvegicus (Rat).